Consider the following 947-residue polypeptide: Pyruvate, phosphate dikinase 1, chloroplastic (947 aa).

A chloroplast-targeting transit peptide spans M1–P71. The segment at R39–C60 is disordered. T527 bears the Phosphothreonine; by PDRP1 mark. The Tele-phosphohistidine intermediate role is filled by H529. R635, R692, E821, G842, T843, N844, and D845 together coordinate substrate. E821 provides a ligand contact to Mg(2+). D845 provides a ligand contact to Mg(2+). The Proton donor role is filled by C907.

It belongs to the PEP-utilizing enzyme family. As to quaternary structure, homotetramer. It depends on Mg(2+) as a cofactor. Phosphorylation of Thr-527 in the dark inactivates the enzyme. Dephosphorylation upon light stimulation reactivates the enzyme. Phosphorylation increases during the first 20 days post-pollination and then remains constant through the 40-day mature seed stage. Reactivation by dephosphorylation during germination is negligible. As to expression, isoform 1 is only expressed in green leaves. Isoform 2 is found in roots, stems, rachis branches, leaf sheaths, green leaves and spikelets. The non-phosphorylated PPDK in mature seeds is endosperm-localized.

The protein resides in the plastid. The protein localises to the chloroplast. Its subcellular location is the cytoplasm. The catalysed reaction is pyruvate + phosphate + ATP = phosphoenolpyruvate + AMP + diphosphate + H(+). Activated by light-induced dephosphorylation. Inhibited by dark-induced phosphorylation. Both reactions are catalyzed by PDRP1. Formation of phosphoenolpyruvate. The cytoplasmic isoform supports the biosynthetic processes in the nascent endosperm and provides an efficient mechanism for glycolytic ATP synthesis in oxygen depleted tissues. May be involved in regulating the flux of carbon into starch and fatty acids of seeds and in the remobilization of nitrogen reserves in senescing leaves. This Oryza sativa subsp. japonica (Rice) protein is Pyruvate, phosphate dikinase 1, chloroplastic (PPDK1).